Here is a 378-residue protein sequence, read N- to C-terminus: uncharacterized protein (378 aa).

The For GATase activity role is filled by cysteine 16. A Glutamine amidotransferase type-2 domain is found at 16 to 378 (CGLFGVIDRS…ELAKQLSEVE (363 aa)).

This is an uncharacterized protein from Archaeoglobus fulgidus (strain ATCC 49558 / DSM 4304 / JCM 9628 / NBRC 100126 / VC-16).